The sequence spans 410 residues: Subtilisin-like protease CPC735_003880 (410 aa).

Residues 1 to 17 form the signal peptide; the sequence is MKLLKSSLLLLLPFVTA. A propeptide spanning residues 18–118 is cleaved from the precursor; it reads NPIPSEDKDI…VTPDRKVYLA (101 aa). The region spanning 31 to 118 is the Inhibitor I9 domain; it reads RYIVTLKDGI…VTPDRKVYLA (88 aa). Residues 127 to 410 form the Peptidase S8 domain; sequence GYNLGHMSSK…IQEMNETVIA (284 aa). The active-site Charge relay system is the Asp-159. A glycan (N-linked (GlcNAc...) asparagine) is linked at Asn-182. The active-site Charge relay system is His-191. Residues Asn-238, Asn-251, and Asn-338 are each glycosylated (N-linked (GlcNAc...) asparagine). The active-site Charge relay system is Ser-347. Asn-405 carries N-linked (GlcNAc...) asparagine glycosylation.

It belongs to the peptidase S8 family.

Its subcellular location is the secreted. Secreted subtilisin-like serine protease with keratinolytic activity that contributes to pathogenicity. The sequence is that of Subtilisin-like protease CPC735_003880 from Coccidioides posadasii (strain C735) (Valley fever fungus).